The chain runs to 832 residues: Subtilisin-like protease SBT2.1 (832 aa).

Residues M1–A24 form the signal peptide. A propeptide spans E25–A138 (activation peptide). 2 N-linked (GlcNAc...) asparagine glycosylation sites follow: N29 and N73. An Inhibitor I9 domain is found at V36–E136. The 540-residue stretch at F145–L684 folds into the Peptidase S8 domain. D172 acts as the Charge relay system in catalysis. N-linked (GlcNAc...) asparagine glycosylation occurs at N233. H247 (charge relay system) is an active-site residue. N-linked (GlcNAc...) asparagine glycosylation is found at N272, N315, N390, N417, N470, N515, and N522. The region spanning L408–S503 is the PA domain. The active-site Charge relay system is the S609. 6 N-linked (GlcNAc...) asparagine glycosylation sites follow: N679, N705, N713, N723, N760, and N801.

The protein belongs to the peptidase S8 family.

It localises to the secreted. The sequence is that of Subtilisin-like protease SBT2.1 from Arabidopsis thaliana (Mouse-ear cress).